A 786-amino-acid polypeptide reads, in one-letter code: Calcium-independent phospholipase A2-gamma (786 aa).

N-linked (GlcNAc...) asparagine glycosylation occurs at asparagine 4. Disordered stretches follow at residues 158–180 (KKYSDKSTEKSPVPEGRNHIIDK), 225–285 (KENS…SLPI), and 321–348 (SKSQAEEQEEPAKSEPAGSKDKTVEEKK). Residues 225–245 (KENSHFQEKSELEGKKVEEGK) show a composition bias toward basic and acidic residues. 2 stretches are compositionally biased toward polar residues: residues 246 to 258 (SSSLDPGILTSQA) and 266 to 285 (SAGTMDKATSPSGTPESLPI). A PNPLA domain is found at 449 to 644 (LTIDGGGTRG…LLNNPSALAM (196 aa)). Positions 453-458 (GGGTRG) match the GXGXXG motif. A helical transmembrane segment spans residues 483-503 (ICGVSTGAILAFMLGLFHLPL). The GXSXG signature appears at 485–489 (GVSTG). Residue serine 487 is the Nucleophile of the active site. The active-site Proton acceptor is the aspartate 631. Residues 631–633 (DGG) carry the DGA/G motif. Lysine 740 bears the N6-succinyllysine mark.

Expressed in kidney, heart and brain.

It is found in the endoplasmic reticulum membrane. The protein resides in the mitochondrion membrane. It localises to the peroxisome membrane. The enzyme catalyses a 1,2-diacyl-sn-glycero-3-phosphocholine + H2O = a 1-acyl-sn-glycero-3-phosphocholine + a fatty acid + H(+). It carries out the reaction a 1,2-diacyl-sn-glycero-3-phosphocholine + H2O = a 2-acyl-sn-glycero-3-phosphocholine + a fatty acid + H(+). It catalyses the reaction a 1,2-diacyl-sn-glycero-3-phosphoethanolamine + H2O = a 1-acyl-sn-glycero-3-phosphoethanolamine + a fatty acid + H(+). The catalysed reaction is a 1-O-(1Z-alkenyl)-2-acyl-sn-glycero-3-phosphocholine + H2O = a 1-O-(1Z-alkenyl)-sn-glycero-3-phosphocholine + a fatty acid + H(+). The enzyme catalyses a 1-acyl-sn-glycero-3-phosphocholine + H2O = sn-glycerol 3-phosphocholine + a fatty acid + H(+). It carries out the reaction 1-acyl-2-(9Z,12Z)-octadecadienoyl-sn-glycero-3-phosphocholine + H2O = a 1-acyl-sn-glycero-3-phosphocholine + (9Z,12Z)-octadecadienoate + H(+). It catalyses the reaction 1-acyl-2-(5Z,8Z,11Z,14Z-eicosatetraenoyl)-sn-glycero-3-phosphocholine + H2O = a 1-acyl-sn-glycero-3-phosphocholine + (5Z,8Z,11Z,14Z)-eicosatetraenoate + H(+). The catalysed reaction is 1-hexadecanoyl-2-(5Z,8Z,11Z,14Z-eicosatetraenoyl)-sn-glycero-3-phosphocholine + H2O = 1-hexadecanoyl-sn-glycero-3-phosphocholine + (5Z,8Z,11Z,14Z)-eicosatetraenoate + H(+). The enzyme catalyses 1-octadecanoyl-2-(9Z-octadecenoyl)-sn-glycero-3-phosphocholine + H2O = 1-octadecanoyl-sn-glycero-3-phosphocholine + (9Z)-octadecenoate + H(+). It carries out the reaction 1-hexadecanoyl-2-(9Z-octadecenoyl)-sn-glycero-3-phosphocholine + H2O = 1-hexadecanoyl-sn-glycero-3-phosphocholine + (9Z)-octadecenoate + H(+). It catalyses the reaction 1-hexadecanoyl-2-(9Z,12Z-octadecadienoyl)-sn-glycero-3-phosphocholine + H2O = (9Z,12Z)-octadecadienoate + 1-hexadecanoyl-sn-glycero-3-phosphocholine + H(+). The catalysed reaction is 1-acyl-2-(9Z,12Z)-octadecadienoyl-sn-glycero-3-phosphoethanolamine + H2O = a 1-acyl-sn-glycero-3-phosphoethanolamine + (9Z,12Z)-octadecadienoate + H(+). The enzyme catalyses 1-acyl-2-(5Z,8Z,11Z,14Z)-eicosatetraenoyl-sn-glycero-3-phosphoethanolamine + H2O = a 1-acyl-sn-glycero-3-phosphoethanolamine + (5Z,8Z,11Z,14Z)-eicosatetraenoate + H(+). It carries out the reaction 1-hexadecanoyl-2-(5Z,8Z,11Z,14Z-eicosatetraenoyl)-sn-glycero-3-phosphoethanolamine + H2O = 1-hexadecanoyl-sn-glycero-3-phosphoethanolamine + (5Z,8Z,11Z,14Z)-eicosatetraenoate + H(+). It catalyses the reaction 1-hexadecanoyl-2-(5Z,8Z,11Z,14Z-eicosatetraenoyl)-sn-glycero-3-phosphocholine + H2O = 2-(5Z,8Z,11Z,14Z)-eicosatetraenoyl-sn-glycero-3-phosphocholine + hexadecanoate + H(+). The catalysed reaction is 1-octadecanoyl-2-(9Z-octadecenoyl)-sn-glycero-3-phosphocholine + H2O = 2-(9Z-octadecenoyl)-sn-glycero-3-phosphocholine + octadecanoate + H(+). The enzyme catalyses 1-hexadecanoyl-2-(4Z,7Z,10Z,13Z,16Z,19Z-docosahexaenoyl)-sn-glycero-3-phosphocholine + H2O = 2-(4Z,7Z,10Z,13Z,16Z,19Z-docosahexaenoyl)-sn-glycero-3-phosphocholine + hexadecanoate + H(+). It carries out the reaction 1-O-(1Z)-hexadecenyl-2 (5Z,8Z,11Z,14Z)-eicosatetraenoyl-sn-glycero-3-phosphocholine + H2O = 1-(1Z-hexadecenyl)-sn-glycero-3-phosphocholine + (5Z,8Z,11Z,14Z)-eicosatetraenoate + H(+). It catalyses the reaction 1-O-(1Z-hexadecenyl)-2-(9Z-octadecenoyl)-sn-glycero-3-phosphocholine + H2O = 1-(1Z-hexadecenyl)-sn-glycero-3-phosphocholine + (9Z)-octadecenoate + H(+). The catalysed reaction is 1-hexadecanoyl-sn-glycero-3-phosphocholine + H2O = sn-glycerol 3-phosphocholine + hexadecanoate + H(+). The enzyme catalyses 1',3'-bis-[1,2-di-(9Z,12Z-octadecadienoyl)-sn-glycero-3-phospho]-glycerol + H2O = 1'-[1,2-di-(9Z,12Z-octadecadienoyl)-sn-glycero-3-phospho]-3'-[1-(9Z,12Z-octadecadienoyl)-sn-glycero-3-phospho]-glycerol + (9Z,12Z)-octadecadienoate + H(+). It carries out the reaction 1'-[1-acyl-2-(9-hydroxy-(10E,12Z)-octadecadienoyl)-sn-glycero-3-phospho]-3'-[1,2-diacyl-sn-glycero-3-phospho]-glycerol + H2O = 9-hydroxy-(10E,12Z)-octadecadienoate + 1'-[1,2-diacyl-sn-glycero-3-phospho],3'-[1-acyl-sn-glycero-3-phospho]-glycerol + H(+). The protein operates within phospholipid metabolism. Its activity is regulated as follows. Calcium-independent phospholipase. Its function is as follows. Calcium-independent and membrane-bound phospholipase, that catalyzes the esterolytic cleavage of fatty acids from glycerophospholipids to yield free fatty acids and lysophospholipids, hence regulating membrane physical properties and the release of lipid second messengers and growth factors. Hydrolyzes phosphatidylethanolamine, phosphatidylcholine and probably phosphatidylinositol with a possible preference for the former. Has also a broad substrate specificity in terms of fatty acid moieties, hydrolyzing saturated and mono-unsaturated fatty acids at nearly equal rates from either the sn-1 or sn-2 position in diacyl phosphatidylcholine. However, has a weak activity toward polyunsaturated fatty acids at the sn-2 position, and thereby favors the production of 2-arachidonoyl lysophosphatidylcholine, a key branch point metabolite in eicosanoid signaling. On the other hand, can produce arachidonic acid from the sn-1 position of diacyl phospholipid and from the sn-2 position of arachidonate-containing plasmalogen substrates. Therefore, plays an important role in the mobilization of arachidonic acid in response to cellular stimuli and the generation of lipid second messengers. Can also hydrolyze lysophosphatidylcholine. In the mitochondrial compartment, catalyzes the hydrolysis and release of oxidized aliphatic chains from cardiolipin and integrates mitochondrial bioenergetics and signaling. It is essential for maintaining efficient bioenergetic mitochondrial function through tailoring mitochondrial membrane lipid metabolism and composition. In Oryctolagus cuniculus (Rabbit), this protein is Calcium-independent phospholipase A2-gamma.